The primary structure comprises 375 residues: tRNA-specific 2-thiouridylase MnmA (375 aa).

ATP-binding positions include 12-19 (GMSGGVDS) and methionine 38. The interaction with target base in tRNA stretch occupies residues 98-100 (NPD). Cysteine 103 serves as the catalytic Nucleophile. A disulfide bond links cysteine 103 and cysteine 200. An ATP-binding site is contributed by glycine 127. Residues 150 to 152 (KDQ) form an interaction with tRNA region. Cysteine 200 functions as the Cysteine persulfide intermediate in the catalytic mechanism. The tract at residues 312 to 313 (RY) is interaction with tRNA.

The protein belongs to the MnmA/TRMU family.

It is found in the cytoplasm. It catalyses the reaction S-sulfanyl-L-cysteinyl-[protein] + uridine(34) in tRNA + AH2 + ATP = 2-thiouridine(34) in tRNA + L-cysteinyl-[protein] + A + AMP + diphosphate + H(+). In terms of biological role, catalyzes the 2-thiolation of uridine at the wobble position (U34) of tRNA, leading to the formation of s(2)U34. In Lactobacillus helveticus (strain DPC 4571), this protein is tRNA-specific 2-thiouridylase MnmA.